We begin with the raw amino-acid sequence, 195 residues long: Imidazoleglycerol-phosphate dehydratase (195 aa).

The protein belongs to the imidazoleglycerol-phosphate dehydratase family.

The protein resides in the cytoplasm. The enzyme catalyses D-erythro-1-(imidazol-4-yl)glycerol 3-phosphate = 3-(imidazol-4-yl)-2-oxopropyl phosphate + H2O. Its pathway is amino-acid biosynthesis; L-histidine biosynthesis; L-histidine from 5-phospho-alpha-D-ribose 1-diphosphate: step 6/9. The chain is Imidazoleglycerol-phosphate dehydratase from Thermotoga maritima (strain ATCC 43589 / DSM 3109 / JCM 10099 / NBRC 100826 / MSB8).